The chain runs to 288 residues: Probable prolyl 4-hydroxylase 9 (288 aa).

Residues 1 to 12 lie on the Cytoplasmic side of the membrane; it reads MKSRLKSYRRKK. The chain crosses the membrane as a helical; Signal-anchor for type II membrane protein span at residues 13–33; sequence LGLATVIVFCSLCFLFGFYGS. Residues 34–288 lie on the Lumenal side of the membrane; sequence TLLSQNVPRV…KWIRDQDQEE (255 aa). A Fe2OG dioxygenase domain is found at 164–283; the sequence is HGESFNILRY…KWVATKWIRD (120 aa). Fe cation-binding residues include H182 and D184. N-linked (GlcNAc...) asparagine glycosylation is found at N221 and N255. H264 is a Fe cation binding site. K274 serves as a coordination point for 2-oxoglutarate.

This sequence belongs to the P4HA family. It depends on Fe(2+) as a cofactor. Requires L-ascorbate as cofactor.

It is found in the endoplasmic reticulum membrane. It localises to the golgi apparatus. The enzyme catalyses L-prolyl-[collagen] + 2-oxoglutarate + O2 = trans-4-hydroxy-L-prolyl-[collagen] + succinate + CO2. Catalyzes the post-translational formation of 4-hydroxyproline in -Xaa-Pro-Gly- sequences in proline-rich peptide sequences of plant glycoproteins and other proteins. Hydroxyprolines are important constituent of many plant cell wall glycoproteins such as extensins, hydroxyproline-rich glycoproteins, lectins and arabinogalactan proteins. In Arabidopsis thaliana (Mouse-ear cress), this protein is Probable prolyl 4-hydroxylase 9.